The chain runs to 489 residues: MAKAVKKEIAKSEEVVSIKAPRKEPGKKIPVVSIVGRQNVGKSTLFNSLLKKKLAITEDYPGVTRDVLSARIYQEEKDLDFYLCDTPGLDIENPDSLSQTILETAYGQLRESDVIVFLLDKNLITTADHGLLNYLRREDKVANKPIIYCVNKADKELDEFDLEEFYRMGLSEVLPISAIGRKNLGLLLEKIQFFLKDKPGKVWIEKISASKKKEAQPLPLAEEDYEFRLAIVGKPNSGKSSLLNAICGYERAVVSDVAGTTRDSIDTLLEFGDRRLLLTDTAGIRKQSKTAEALEFYSYQRTIKAIESSDLVIHLLDAKKGFGDFDKKITSLLQEKGKPFLLAVNKWDSIEDKTDKTFKEYKEKLYSRFPLLNEVPIITISATERLRVQKLMDLSFDLASRSHRKVSTSELNKNLKNWMGLAGRSFSAHQPPKMLYCTQVSTSPFHLILFVNHVEYFKSNLVSFLKKKLTETYDLQGIPIRLEFRSDRK.

EngA-type G domains are found at residues 30–199 (PVVS…KDKP) and 227–403 (FRLA…SRSH). GTP-binding positions include 36–43 (GRQNVGKS), 85–89 (DTPGL), 151–154 (NKAD), 233–240 (GKPNSGKS), 280–284 (DTAGI), and 345–348 (NKWD). The KH-like domain maps to 404 to 488 (RKVSTSELNK…PIRLEFRSDR (85 aa)).

The protein belongs to the TRAFAC class TrmE-Era-EngA-EngB-Septin-like GTPase superfamily. EngA (Der) GTPase family. Associates with the 50S ribosomal subunit.

In terms of biological role, GTPase that plays an essential role in the late steps of ribosome biogenesis. The polypeptide is GTPase Der (Leptospira interrogans serogroup Icterohaemorrhagiae serovar copenhageni (strain Fiocruz L1-130)).